The primary structure comprises 205 residues: Small ribosomal subunit protein uS4 (205 aa).

The S4 RNA-binding domain occupies 94–157 (SRLDTVVYRM…KQIPLIQESV (64 aa)).

This sequence belongs to the universal ribosomal protein uS4 family. As to quaternary structure, part of the 30S ribosomal subunit. Contacts protein S5. The interaction surface between S4 and S5 is involved in control of translational fidelity.

One of the primary rRNA binding proteins, it binds directly to 16S rRNA where it nucleates assembly of the body of the 30S subunit. In terms of biological role, with S5 and S12 plays an important role in translational accuracy. The polypeptide is Small ribosomal subunit protein uS4 (Rickettsia conorii (strain ATCC VR-613 / Malish 7)).